We begin with the raw amino-acid sequence, 435 residues long: 5-hydroxybenzimidazole synthase (435 aa).

Substrate is bound by residues M95, Y124, H163, 186–188 (SKG), 227–230 (NGLR), and E266. Position 270 (H270) interacts with Zn(2+). Substrate is bound at residue Y293. Position 334 (H334) interacts with Zn(2+). [4Fe-4S] cluster-binding residues include C410, C413, and C417.

Belongs to the ThiC family. 5-hydroxybenzimidazole synthase subfamily. In terms of assembly, homodimer. The cofactor is [4Fe-4S] cluster.

It catalyses the reaction 5-amino-1-(5-phospho-beta-D-ribosyl)imidazole + AH2 + S-adenosyl-L-methionine = 5-hydroxybenzimidazole + 5'-deoxyadenosine + formate + L-methionine + A + NH4(+) + phosphate + 2 H(+). Its function is as follows. Catalyzes the conversion of aminoimidazole ribotide (AIR) to 5-hydroxybenzimidazole (5-HBI) in a radical S-adenosyl-L-methionine (SAM)-dependent reaction. Is thus involved in the anaerobic biosynthesis of the benzimidazole lower axial ligand of the cobamide produced by G.sulfurreducens. In Geobacter sulfurreducens (strain ATCC 51573 / DSM 12127 / PCA), this protein is 5-hydroxybenzimidazole synthase.